A 670-amino-acid chain; its full sequence is Small ribosomal subunit protein mS39 (670 aa).

A mitochondrion-targeting transit peptide spans 1–13; sequence MAAPCVRLGSVRC. PPR repeat units lie at residues 129 to 163, 164 to 199, 209 to 239, 240 to 274, 275 to 314, 315 to 351, 352 to 392, 396 to 430, 438 to 472, 473 to 507, and 556 to 590; these read VEGV…GTAP, SLET…EVQD, RPRQ…MPER, NAHS…RLTA, DVQT…NVRP, NLLT…NIEP, SLAT…FTLR, DVYF…DNRG, QSTY…LYYP, NSRG…GHSN, and SAGS…HRVP. The tract at residues 187-213 is disordered; the sequence is IQTSEQEQQEVQDQQETEDPKKRPRQY. Over residues 193-203 the composition is skewed to acidic residues; it reads EQQEVQDQQET. The segment at 648-670 is disordered; the sequence is EDLQKSHSSSSSSSSSSSDSDRE. Positions 653 to 670 are enriched in low complexity; it reads SHSSSSSSSSSSSDSDRE.

It belongs to the mitochondrion-specific ribosomal protein mS39 family.

The protein localises to the mitochondrion. Mitochondrial protein that may have a role in mitochondrial translation. This Xenopus tropicalis (Western clawed frog) protein is Small ribosomal subunit protein mS39 (ptcd3).